The following is a 360-amino-acid chain: Abhydrolase domain-containing protein lid-1 (360 aa).

The region spanning Ala-73–Tyr-203 is the AB hydrolase-1 domain.

It belongs to the peptidase S33 family. ABHD4/ABHD5 subfamily. In terms of assembly, interacts with atgl-1.

Its subcellular location is the lipid droplet. In terms of biological role, acts coordinately with atgl-1 within the lipolytic cascade to distribute stored energy to tissues during nutritional deprivation. In Caenorhabditis elegans, this protein is Abhydrolase domain-containing protein lid-1.